The following is a 187-amino-acid chain: Basic helix-loop-helix transcription factor scleraxis (187 aa).

Disordered regions lie at residues 21 to 83 (LSED…TNSV) and 140 to 163 (AFFH…QPKQ). Residues 34–43 (SDEKPFHLDA) are compositionally biased toward basic and acidic residues. Basic residues predominate over residues 50 to 72 (AGKRRSGKKAGRLHREPRQRHTA). Residues 67-119 (RQRHTANARERDRTNSVNTAFTALRTLIPTEPADRKLSKIETLRLASSYISHL) form the bHLH domain.

As to quaternary structure, efficient DNA binding requires dimerization with another bHLH protein. Dimerizes and binds the E-box consensus sequence with E12. In terms of tissue distribution, expressed in the intersomitic, the superficial proximomedial limb mesenchyme and the subectodermal mesenchyme.

It localises to the nucleus. Functionally, plays an early essential role in mesoderm formation, as well as a later role in formation of somite-derived chondrogenic lineages. The protein is Basic helix-loop-helix transcription factor scleraxis (SCX) of Gallus gallus (Chicken).